Consider the following 928-residue polypeptide: Isoleucine--tRNA ligase (928 aa).

Positions 57-67 (PFANGNIHMGH) match the 'HIGH' region motif. Glu-552 is an L-isoleucyl-5'-AMP binding site. Residues 593 to 597 (KMSKS) carry the 'KMSKS' region motif. Lys-596 lines the ATP pocket. Cys-887, Cys-890, Cys-907, and Cys-910 together coordinate Zn(2+).

Belongs to the class-I aminoacyl-tRNA synthetase family. IleS type 1 subfamily. As to quaternary structure, monomer. Requires Zn(2+) as cofactor.

It localises to the cytoplasm. It catalyses the reaction tRNA(Ile) + L-isoleucine + ATP = L-isoleucyl-tRNA(Ile) + AMP + diphosphate. In terms of biological role, catalyzes the attachment of isoleucine to tRNA(Ile). As IleRS can inadvertently accommodate and process structurally similar amino acids such as valine, to avoid such errors it has two additional distinct tRNA(Ile)-dependent editing activities. One activity is designated as 'pretransfer' editing and involves the hydrolysis of activated Val-AMP. The other activity is designated 'posttransfer' editing and involves deacylation of mischarged Val-tRNA(Ile). The protein is Isoleucine--tRNA ligase of Latilactobacillus sakei subsp. sakei (strain 23K) (Lactobacillus sakei subsp. sakei).